A 501-amino-acid polypeptide reads, in one-letter code: Ribose import ATP-binding protein RbsA (501 aa).

ABC transporter domains lie at 8-245 and 255-500; these read LKMV…VGRT and VKKG…VGIN. 40 to 47 is an ATP binding site; that stretch reads GENGAGKS.

This sequence belongs to the ABC transporter superfamily. Ribose importer (TC 3.A.1.2.1) family. As to quaternary structure, the complex is composed of an ATP-binding protein (RbsA), two transmembrane proteins (RbsC) and a solute-binding protein (RbsB).

It localises to the cell membrane. It catalyses the reaction D-ribose(out) + ATP + H2O = D-ribose(in) + ADP + phosphate + H(+). In terms of biological role, part of the ABC transporter complex RbsABC involved in ribose import. Responsible for energy coupling to the transport system. This Clostridium perfringens (strain SM101 / Type A) protein is Ribose import ATP-binding protein RbsA.